The primary structure comprises 299 residues: ATP phosphoribosyltransferase (299 aa).

The protein belongs to the ATP phosphoribosyltransferase family. Long subfamily. As to quaternary structure, equilibrium between an active dimeric form, an inactive hexameric form and higher aggregates. Interconversion between the various forms is largely reversible and is influenced by the natural substrates and inhibitors of the enzyme. Requires Mg(2+) as cofactor.

It is found in the cytoplasm. The enzyme catalyses 1-(5-phospho-beta-D-ribosyl)-ATP + diphosphate = 5-phospho-alpha-D-ribose 1-diphosphate + ATP. The protein operates within amino-acid biosynthesis; L-histidine biosynthesis; L-histidine from 5-phospho-alpha-D-ribose 1-diphosphate: step 1/9. Its activity is regulated as follows. Feedback inhibited by histidine. Its function is as follows. Catalyzes the condensation of ATP and 5-phosphoribose 1-diphosphate to form N'-(5'-phosphoribosyl)-ATP (PR-ATP). Has a crucial role in the pathway because the rate of histidine biosynthesis seems to be controlled primarily by regulation of HisG enzymatic activity. The protein is ATP phosphoribosyltransferase of Blochmanniella floridana.